Consider the following 396-residue polypeptide: NADH-quinone oxidoreductase subunit D (396 aa).

It belongs to the complex I 49 kDa subunit family. As to quaternary structure, NDH-1 is composed of 14 different subunits. Subunits NuoB, C, D, E, F, and G constitute the peripheral sector of the complex.

It is found in the cell inner membrane. It carries out the reaction a quinone + NADH + 5 H(+)(in) = a quinol + NAD(+) + 4 H(+)(out). Functionally, NDH-1 shuttles electrons from NADH, via FMN and iron-sulfur (Fe-S) centers, to quinones in the respiratory chain. The immediate electron acceptor for the enzyme in this species is believed to be ubiquinone. Couples the redox reaction to proton translocation (for every two electrons transferred, four hydrogen ions are translocated across the cytoplasmic membrane), and thus conserves the redox energy in a proton gradient. This chain is NADH-quinone oxidoreductase subunit D, found in Chelativorans sp. (strain BNC1).